A 300-amino-acid chain; its full sequence is Geranylgeranyl pyrophosphate synthase (300 aa).

The residue at position 1 (M1) is an N-acetylmethionine. Isopentenyl diphosphate-binding residues include K25, R28, and H57. D64 and D68 together coordinate Mg(2+). R73 is a dimethylallyl diphosphate binding site. R74 is a binding site for isopentenyl diphosphate. The dimethylallyl diphosphate site is built by K151, T152, Q185, K202, and K212.

Belongs to the FPP/GGPP synthase family. As to quaternary structure, homohexamer; trimer of homodimers. Mg(2+) serves as cofactor.

It localises to the cytoplasm. Its subcellular location is the perinuclear region. The protein resides in the myofibril. It is found in the sarcomere. The protein localises to the z line. The enzyme catalyses isopentenyl diphosphate + dimethylallyl diphosphate = (2E)-geranyl diphosphate + diphosphate. It carries out the reaction isopentenyl diphosphate + (2E)-geranyl diphosphate = (2E,6E)-farnesyl diphosphate + diphosphate. It catalyses the reaction isopentenyl diphosphate + (2E,6E)-farnesyl diphosphate = (2E,6E,10E)-geranylgeranyl diphosphate + diphosphate. Its pathway is isoprenoid biosynthesis; farnesyl diphosphate biosynthesis; farnesyl diphosphate from geranyl diphosphate and isopentenyl diphosphate: step 1/1. It functions in the pathway isoprenoid biosynthesis; geranyl diphosphate biosynthesis; geranyl diphosphate from dimethylallyl diphosphate and isopentenyl diphosphate: step 1/1. It participates in isoprenoid biosynthesis; geranylgeranyl diphosphate biosynthesis; geranylgeranyl diphosphate from farnesyl diphosphate and isopentenyl diphosphate: step 1/1. In terms of biological role, catalyzes the trans-addition of the three molecules of IPP onto DMAPP to form geranylgeranyl pyrophosphate, an important precursor of carotenoids and geranylated proteins. The sequence is that of Geranylgeranyl pyrophosphate synthase (GGPS1) from Bos taurus (Bovine).